Consider the following 510-residue polypeptide: DNA nucleotidylexotransferase (510 aa).

A disordered region spans residues 1 to 22 (MDPLQAVHLGPRKKRPRQLGTP). The Nuclear localization signal motif lies at 11–17 (PRKKRPR). The BRCT domain occupies 27 to 124 (PYDIRFRDLV…KPVEMMGRHQ (98 aa)). A Phosphoserine modification is found at serine 134. The tract at residues 151–510 (SQYACQRRTT…DYIEPWERNA (360 aa)) is mediates interaction with DNTTIP2. Residues 258 to 262 (VGLKT) form an involved in DNA binding region. Residues 333 to 338 (GFRRGK) and 342 to 345 (HDVD) contribute to the a 2'-deoxyribonucleoside 5'-triphosphate site. Positions 343, 345, and 434 each coordinate Mg(2+). 449 to 450 (GW) contacts a 2'-deoxyribonucleoside 5'-triphosphate.

The protein belongs to the DNA polymerase type-X family. Interacts with PRP19 and DNTTIP1. Forms a ternary complex with DNTTIP2 and core histone. Released from this complex by PCNA. Interacts with TRERF1. It depends on Mg(2+) as a cofactor. In terms of tissue distribution, isoform TDT-L: Expressed in the thymus, and, at lower levels, in the bone marrow. Detected in both cycling and noncycling pro-B and pre-B cells (at protein level). Isoform TDT-S: Expressed in both cycling and noncycling pro-B, but not pre-B, cells (at protein level). Not detected in mature peripheral or germinal center B cells.

Its subcellular location is the nucleus. The protein resides in the cytoplasm. The enzyme catalyses DNA(n) + a 2'-deoxyribonucleoside 5'-triphosphate = DNA(n+1) + diphosphate. In terms of biological role, transferase that catalyzes the nontemplated addition of nucleoside triphosphate to coding ends during V(D)J recombination (N addition). Involved in the generation of diversity in the antigen-binding region of immunoglobulin heavy and light chains and T-cell receptors during B- and T-cell development. Does not act on double-stranded DNA with blunt ends. Functionally, 3'-to-5' DNA exonuclease. Involved in the generation of diversity in the antigen-binding region of immunoglobulin heavy and light chains and T-cell receptors during B- and T-cell development. Acts on single-stranded and double-stranded DNA with 3' or 5' extensions, but not on double-stranded DNA with blunt ends. Attenuates not only isoform TDT-S-catalyzed N addition, but also P (palindromic) addition in coding joins. Lacks terminal transferase activity. This chain is DNA nucleotidylexotransferase (Dntt), found in Mus musculus (Mouse).